The chain runs to 158 residues: Secreted RxLR effector protein 131 (158 aa).

The signal sequence occupies residues 1–20 (MRQIPLVVVLLLAYAARLQG). A RxLR-dEER motif is present at residues 39 to 57 (RDLDGSTTSMSVNVDDEER). Positions 120–158 (KGNVKYLAIIYVICILSVLGILGTVFAINRNISNQYIHE) are host BKI1-binding. Residues 127–147 (AIIYVICILSVLGILGTVFAI) traverse the membrane as a helical segment. A glycan (N-linked (GlcNAc...) asparagine) is linked at asparagine 150.

Belongs to the RxLR effector family. Interacts with host BKI1.

The protein localises to the secreted. The protein resides in the host cell membrane. Secreted effector that suppresses pathogen-associated molecular pattern (PAMP)-triggered immunity (PTI) in host plants. Suppresses both defense-related brassinosteroid (BR) and ERECTA (ER) signaling pathways in planta by interacting with host BRI1 kinase inhibitor 1 (BKI1) at the host plasma membrane, leading to a host dwarf phenotype. This Plasmopara viticola (Downy mildew of grapevine) protein is Secreted RxLR effector protein 131.